The primary structure comprises 193 residues: ATP-dependent Clp protease proteolytic subunit (193 aa).

S97 serves as the catalytic Nucleophile. Residue H122 is part of the active site.

The protein belongs to the peptidase S14 family. Fourteen ClpP subunits assemble into 2 heptameric rings which stack back to back to give a disk-like structure with a central cavity, resembling the structure of eukaryotic proteasomes.

It is found in the cytoplasm. The catalysed reaction is Hydrolysis of proteins to small peptides in the presence of ATP and magnesium. alpha-casein is the usual test substrate. In the absence of ATP, only oligopeptides shorter than five residues are hydrolyzed (such as succinyl-Leu-Tyr-|-NHMec, and Leu-Tyr-Leu-|-Tyr-Trp, in which cleavage of the -Tyr-|-Leu- and -Tyr-|-Trp bonds also occurs).. In terms of biological role, cleaves peptides in various proteins in a process that requires ATP hydrolysis. Has a chymotrypsin-like activity. Plays a major role in the degradation of misfolded proteins. This chain is ATP-dependent Clp protease proteolytic subunit, found in Fusobacterium nucleatum subsp. nucleatum (strain ATCC 25586 / DSM 15643 / BCRC 10681 / CIP 101130 / JCM 8532 / KCTC 2640 / LMG 13131 / VPI 4355).